A 629-amino-acid polypeptide reads, in one-letter code: Proteoglycan Cow (629 aa).

Positions 1–27 are cleaved as a signal peptide; it reads MKHSPLIASACLALVLMSSSLIGSTEA. Disordered stretches follow at residues 118–186 and 198–223; these read KRRV…ESKE and GDKQQQQQQLSQPAAGPSVIQQDDDE. The segment covering 128-143 has biased composition (acidic residues); sequence DSQDAEDINNDDEDNS. N142 carries N-linked (GlcNAc...) asparagine glycosylation. The span at 144 to 159 shows a compositional bias: low complexity; that stretch reads SDGGSSNSSPTGTNNA. A compositionally biased stretch (acidic residues) spans 167–186; it reads EETDDEDKSLSLGDDDESKE. Positions 222 to 273 constitute a Kazal-like domain; the sequence is DEELDNCKPCPVAKPTFLCGADNRTYSSLCRLDYHNCIHSTSIRIACKGFCP. Disulfide bonds link C228/C258, C231/C251, and C240/C272. N244 carries N-linked (GlcNAc...) asparagine glycosylation. The interval 298–356 is disordered; sequence SLDQQQQQQQQQQQQQQQQQAYKDSNNNNIMMNSGNIMGGNNNDFNTIMNDKEDNNRHN. Low complexity predominate over residues 301–340; it reads QQQQQQQQQQQQQQQQQAYKDSNNNNIMMNSGNIMGGNNN. EF-hand domains lie at 468-503 and 508-535; these read ACKTEAKWMFGHLDLNNDGQLSLQEMYDLEHDQNER and FIDTCDLDTDSSINTREWCRCFEKTDRP. 5 residues coordinate Ca(2+): D481, N483, D485, Q487, and E492. The region spanning 533 to 594 is the Thyroglobulin type-1 domain; that stretch reads DRPCAAVRRR…NTRTRGKPNC (62 aa). 3 disulfide bridges follow: C536–C555, C566–C573, and C575–C594. The tract at residues 602–629 is disordered; it reads ASLTSDDEDEGADDEDSAEGSADQMLVF. Acidic residues predominate over residues 606–619; sequence SDDEDEGADDEDSA. A compositionally biased stretch (low complexity) spans 620–629; that stretch reads EGSADQMLVF.

As to quaternary structure, interacts (in heparan sulfate-bound form) with wg. In terms of processing, contains heparan sulfate O-linked oligosaccharides. In the wing disk, detected throughout the disk where it is localized primarily to the apical surface but is also present at the basal surface (at protein level).

The protein localises to the secreted. In terms of biological role, binds to the Wnt signaling protein wg, stabilizes it and promotes its extracellular distribution. This is required for establishment of a wg gradient during development to allow for regulation of target genes at different levels. The polypeptide is Proteoglycan Cow (Drosophila melanogaster (Fruit fly)).